The primary structure comprises 1336 residues: Glutamate receptor ionotropic, NMDA 2D (1336 aa).

Positions 1-27 (MRGAGGPRGPRGPAKMLLLLALACASP) are cleaved as a signal peptide. The Extracellular portion of the chain corresponds to 28–582 (FPEEAPGPGG…SPSAFLEPYS (555 aa)). The N-linked (GlcNAc...) asparagine glycan is linked to N92. Cysteines 104 and 348 form a disulfide. N352, N366, N384, and N467 each carry an N-linked (GlcNAc...) asparagine glycan. 2 cysteine pairs are disulfide-bonded: C455–C483 and C462–C484. S539, T541, and R546 together coordinate L-glutamate. An N-linked (GlcNAc...) asparagine glycan is attached at N569. Residues 583-604 (PAVWVMMFVMCLTVVAVTVFIF) traverse the membrane as a helical segment. Topologically, residues 605-629 (EYLSPVGYNRSLATGKRPGGSTFTI) are cytoplasmic. The discontinuously helical intramembrane region spans 630 to 641 (GKSIWLLWALVF). The segment at 631 to 650 (KSIWLLWALVFNNSVPVENP) is pore-forming. Residues 642 to 653 (NNSVPVENPRGT) lie on the Cytoplasmic side of the membrane. Residues 654–674 (TSKIMVLVWAFFAVIFLASYT) traverse the membrane as a helical segment. Over 675 to 843 (ANLAAFMIQE…EVMSSKLDID (169 aa)) the chain is Extracellular. Residues S717, T718, and D759 each coordinate L-glutamate. A disulfide bond links C773 and C828. Residues 844–867 (NMAGVFYMLLVAMGLSLLVFAWEH) form a helical membrane-spanning segment. Residues 868 to 1336 (LVYWRLRHCL…AHFSSLESEV (469 aa)) lie on the Cytoplasmic side of the membrane. 3 disordered regions span residues 900–934 (EAAPPPAKPPPPPQPLPSPAYPAPRPAPGPAPFVP), 981–1123 (RAAP…SLGG), and 1225–1336 (RCGC…ESEV). Residues 902 to 932 (APPPAKPPPPPQPLPSPAYPAPRPAPGPAPF) show a composition bias toward pro residues. Low complexity predominate over residues 981–991 (RAAPRGAAGRP). Positions 992 to 1006 (LSPPAAQPPQKPPPS) are enriched in pro residues. The segment covering 1035-1044 (AAAATAVGPP) has biased composition (low complexity). Positions 1074–1089 (PGAGGAGGTGGAGGGA) are enriched in gly residues. Residues 1091–1104 (AAPPPCRAAPPPCP) show a composition bias toward pro residues. Basic residues predominate over residues 1225 to 1240 (RCGCPRSHPHRPRASH). Omega-N-methylarginine is present on R1316. S1326 carries the post-translational modification Phosphoserine. Residues 1334–1336 (SEV) carry the PDZ-binding motif.

It belongs to the glutamate-gated ion channel (TC 1.A.10.1) family. NR2D/GRIN2D subfamily. In terms of assembly, heterotetramer. Forms heterotetrameric channels composed of two GluN1/zeta subunits (GRIN1), and two identical GluN2/epsilon subunits (GRIN2A, GRIN2B, GRIN2C or GRIN2D) or GluN3 subunits (GRIN3A or GRIN3B) (in vitro). In vivo, the subunit composition may depend on the expression levels of the different subunits. Interacts with PDZ domains of PATJ and DLG4.

The protein resides in the cell membrane. The protein localises to the postsynaptic cell membrane. The enzyme catalyses Ca(2+)(in) = Ca(2+)(out). The catalysed reaction is Na(+)(in) = Na(+)(out). It catalyses the reaction K(+)(in) = K(+)(out). In terms of biological role, component of N-methyl-D-aspartate (NMDA) receptors (NMDARs) that function as heterotetrameric, ligand-gated cation channels with high calcium permeability and voltage-dependent block by Mg(2+). Participates in synaptic plasticity for learning and memory formation. Channel activation requires binding of the neurotransmitter L-glutamate to the GluN2 subunit, glycine or D-serine binding to the GluN1 subunit, plus membrane depolarization to eliminate channel inhibition by Mg(2+). NMDARs mediate simultaneously the potasium efflux and the influx of calcium and sodium. Each GluN2 subunit confers differential attributes to channel properties, including activation, deactivation and desensitization kinetics, pH sensitivity, Ca2(+) permeability, and binding to allosteric modulators. This chain is Glutamate receptor ionotropic, NMDA 2D, found in Homo sapiens (Human).